The primary structure comprises 417 residues: Citrate synthase-related protein DDB_G0287281 (417 aa).

The interval 284-317 (NKNNNNNNNNNNNNNNNNNNNNNNNNSEDDDDDN) is disordered. Positions 286–309 (NNNNNNNNNNNNNNNNNNNNNNNN) are enriched in low complexity.

This sequence belongs to the citrate synthase family.

In Dictyostelium discoideum (Social amoeba), this protein is Citrate synthase-related protein DDB_G0287281.